Consider the following 1468-residue polypeptide: Histone-lysine N-methyltransferase, H3 lysine-4 specific (1468 aa).

Residues 1-11 (MPYSSQQNGYT) show a composition bias toward polar residues. Disordered regions lie at residues 1–439 (MPYS…RSFG), 636–737 (EHKL…EEYD), 848–884 (SAPSQHAPSQQIRTPSGKHASVPLSMPAPPKQERKAI), 986–1103 (AGAH…TGEE), and 1141–1162 (PPEAVVEADQGSETATPETDVP). Residues 12 to 26 (SASTSRLSEQTSSHS) show a composition bias toward low complexity. Composition is skewed to basic and acidic residues over residues 28–40 (SSREDRHLTEKGR), 46–89 (EARH…DHWR), 99–109 (PRDDRRDEARN), 120–136 (PEHSTSRLRHRSPESAH), 146–166 (LDSKPDRGGDRKTGEALDSGR), and 174–215 (YEYD…RDDS). The segment covering 225–235 (RRSRSRSRSRS) has biased composition (basic residues). Composition is skewed to basic and acidic residues over residues 236–287 (RSRD…EHST) and 294–305 (EDSKDLRHESQR). Polar residues-rich tracts occupy residues 306-315 (RVSASVQSAS) and 366-376 (SAPNGSATAPS). Over residues 396-405 (PTREKAEEAR) the composition is skewed to basic and acidic residues. Positions 406-416 (TSSTRRPSSQT) are enriched in low complexity. Positions 417 to 426 (NDNVNNSRDP) are enriched in polar residues. Low complexity-rich tracts occupy residues 650–662 (AAASSSPATPSTT) and 680–694 (PAAPSPSYASSPASA). A compositionally biased stretch (basic and acidic residues) spans 713 to 722 (SSYEESRKLA). The segment covering 849 to 861 (APSQHAPSQQIRT) has biased composition (polar residues). The span at 1012 to 1024 (KKKRGHTHRSKVH) shows a compositional bias: basic residues. A compositionally biased stretch (acidic residues) spans 1072-1085 (SDAEAGTDDVDSTE). The span at 1086–1097 (TDALSRSVSASV) shows a compositional bias: polar residues. Residues 1293-1298 (RADSRR) carry the RxxxRR motif motif. The SET domain occupies 1327–1444 (KQLKFAKSPI…AGEELTYDYK (118 aa)). Tyr-1443 serves as a coordination point for S-adenosyl-L-methionine. The Post-SET domain occupies 1453–1468 (DAIPCLCGSPGCRRFL).

It belongs to the class V-like SAM-binding methyltransferase superfamily. As to quaternary structure, component of the Set1C/COMPASS complex.

It localises to the nucleus. The protein resides in the chromosome. The enzyme catalyses L-lysyl(4)-[histone H3] + 3 S-adenosyl-L-methionine = N(6),N(6),N(6)-trimethyl-L-lysyl(4)-[histone H3] + 3 S-adenosyl-L-homocysteine + 3 H(+). It catalyses the reaction N(6)-methyl-L-lysyl(4)-[histone H3] + S-adenosyl-L-methionine = N(6),N(6)-dimethyl-L-lysyl(4)-[histone H3] + S-adenosyl-L-homocysteine + H(+). It carries out the reaction N(6),N(6)-dimethyl-L-lysyl(4)-[histone H3] + S-adenosyl-L-methionine = N(6),N(6),N(6)-trimethyl-L-lysyl(4)-[histone H3] + S-adenosyl-L-homocysteine + H(+). Functionally, catalytic component of the COMPASS (Set1C) complex that specifically mono-, di- and trimethylates histone H3 to form H3K4me1/2/3. Binds RNAs which might negatively affect its histone methyltransferase activity. COMPASS recognizes ubiquitinated H2B on one face of the nucleosome which stimulates the methylation of H3 on the opposing face. This is Histone-lysine N-methyltransferase, H3 lysine-4 specific (SET1) from Mycosarcoma maydis (Corn smut fungus).